We begin with the raw amino-acid sequence, 337 residues long: Holliday junction branch migration complex subunit RuvB (337 aa).

Positions 4 to 186 are large ATPase domain (RuvB-L); the sequence is ADRLIHPQII…FGIPLRLEFY (183 aa). ATP-binding positions include Arg-26, Gly-67, Lys-70, Thr-71, Thr-72, 133–135, Arg-176, Tyr-186, and Arg-223; that span reads EDY. Residue Thr-71 participates in Mg(2+) binding. A small ATPAse domain (RuvB-S) region spans residues 187–257; it reads NVKDLSSIVA…IAEAALDMLD (71 aa). Positions 260-337 are head domain (RuvB-H); the sequence is AEGFDYMDRK…NHFNIIKPDA (78 aa). DNA contacts are provided by Arg-296, Arg-315, and Arg-320.

This sequence belongs to the RuvB family. In terms of assembly, homohexamer. Forms an RuvA(8)-RuvB(12)-Holliday junction (HJ) complex. HJ DNA is sandwiched between 2 RuvA tetramers; dsDNA enters through RuvA and exits via RuvB. An RuvB hexamer assembles on each DNA strand where it exits the tetramer. Each RuvB hexamer is contacted by two RuvA subunits (via domain III) on 2 adjacent RuvB subunits; this complex drives branch migration. In the full resolvosome a probable DNA-RuvA(4)-RuvB(12)-RuvC(2) complex forms which resolves the HJ.

It is found in the cytoplasm. The catalysed reaction is ATP + H2O = ADP + phosphate + H(+). In terms of biological role, the RuvA-RuvB-RuvC complex processes Holliday junction (HJ) DNA during genetic recombination and DNA repair, while the RuvA-RuvB complex plays an important role in the rescue of blocked DNA replication forks via replication fork reversal (RFR). RuvA specifically binds to HJ cruciform DNA, conferring on it an open structure. The RuvB hexamer acts as an ATP-dependent pump, pulling dsDNA into and through the RuvAB complex. RuvB forms 2 homohexamers on either side of HJ DNA bound by 1 or 2 RuvA tetramers; 4 subunits per hexamer contact DNA at a time. Coordinated motions by a converter formed by DNA-disengaged RuvB subunits stimulates ATP hydrolysis and nucleotide exchange. Immobilization of the converter enables RuvB to convert the ATP-contained energy into a lever motion, pulling 2 nucleotides of DNA out of the RuvA tetramer per ATP hydrolyzed, thus driving DNA branch migration. The RuvB motors rotate together with the DNA substrate, which together with the progressing nucleotide cycle form the mechanistic basis for DNA recombination by continuous HJ branch migration. Branch migration allows RuvC to scan DNA until it finds its consensus sequence, where it cleaves and resolves cruciform DNA. This Shewanella halifaxensis (strain HAW-EB4) protein is Holliday junction branch migration complex subunit RuvB.